We begin with the raw amino-acid sequence, 697 residues long: T-related protein (697 aa).

The tract at residues Met1 to Gly60 is disordered. Composition is skewed to gly residues over residues Val20–Ser35 and His50–Gly60. A DNA-binding region (T-box) is located at residues Leu96 to Asp264. The span at Ser316–Ser330 shows a compositional bias: low complexity. Disordered regions lie at residues Ser316 to Gly407 and Val462 to Pro488. Positions Ser337–Tyr351 are enriched in polar residues. 3 stretches are compositionally biased toward low complexity: residues Ser352–Ser373, Gln381–Ser401, and Ser469–Pro488.

Its subcellular location is the nucleus. Functionally, required for the specification of the hindgut and anal pads. In Drosophila melanogaster (Fruit fly), this protein is T-related protein (byn).